The primary structure comprises 860 residues: Leucine--tRNA ligase (860 aa).

The 'HIGH' region signature appears at 42–52; the sequence is PYPSGRLHMGH. Positions 619–623 match the 'KMSKS' region motif; sequence KMSKS. Position 622 (K622) interacts with ATP.

The protein belongs to the class-I aminoacyl-tRNA synthetase family.

It localises to the cytoplasm. It carries out the reaction tRNA(Leu) + L-leucine + ATP = L-leucyl-tRNA(Leu) + AMP + diphosphate. The polypeptide is Leucine--tRNA ligase (Pasteurella multocida (strain Pm70)).